We begin with the raw amino-acid sequence, 363 residues long: Outer membrane protein P2 (363 aa).

A signal peptide spans methionine 1–alanine 20.

This sequence belongs to the Gram-negative porin family. Homotrimer.

The protein resides in the cell outer membrane. Functionally, forms pores that allow passive diffusion of small molecules across the outer membrane. This chain is Outer membrane protein P2 (ompP2), found in Haemophilus influenzae.